Here is a 342-residue protein sequence, read N- to C-terminus: 4-hydroxy-2-oxovalerate aldolase (342 aa).

The 251-residue stretch at 7–257 folds into the Pyruvate carboxyltransferase domain; sequence IWITEVALRD…KTGVDLYKMM (251 aa). 15-16 is a binding site for substrate; the sequence is RD. Position 16 (D16) interacts with Mn(2+). H19 functions as the Proton acceptor in the catalytic mechanism. Substrate contacts are provided by S169 and H196. The Mn(2+) site is built by H196 and H198. A substrate-binding site is contributed by Y287.

The protein belongs to the 4-hydroxy-2-oxovalerate aldolase family.

It catalyses the reaction (S)-4-hydroxy-2-oxopentanoate = acetaldehyde + pyruvate. The protein is 4-hydroxy-2-oxovalerate aldolase (nbaI) of Geobacillus thermodenitrificans (strain NG80-2).